A 328-amino-acid polypeptide reads, in one-letter code: MNILSIETSCDETSVAITQDGKKVLSNIVFSQIKDHQMFGGVVPEIASRKHVELITLILEKAFQKACLTPQEIDLVAVTQGPGLVGSLLVGINAANVFAYTYQKPLLGINHLLGHLYAAQIEHQIKPNALILLVSGGHTELLHFKNHDQIEVLGTTLDDALGEVYDKIAKALHLGYPGGPLIDQLAQTGKDTYHLVRPYLKNNNFNFSFSGLKSHLVNLLLKQNIQDLNIPNICASFQASVIDVLLTKTKRVLKKLPIQQLIVTGGVASNSALRKKMKETFLDLEVIFPSVQYCTDQAAMIGIAAFYQKNITPPSYKYDLTALPNLTF.

Residues His111 and His115 each coordinate Fe cation. Residues 133-137 (LVSGG), Asp166, Gly179, Asp183, and Asn270 each bind substrate. Asp296 contributes to the Fe cation binding site.

This sequence belongs to the KAE1 / TsaD family. Fe(2+) is required as a cofactor.

The protein localises to the cytoplasm. It catalyses the reaction L-threonylcarbamoyladenylate + adenosine(37) in tRNA = N(6)-L-threonylcarbamoyladenosine(37) in tRNA + AMP + H(+). Functionally, required for the formation of a threonylcarbamoyl group on adenosine at position 37 (t(6)A37) in tRNAs that read codons beginning with adenine. Is involved in the transfer of the threonylcarbamoyl moiety of threonylcarbamoyl-AMP (TC-AMP) to the N6 group of A37, together with TsaE and TsaB. TsaD likely plays a direct catalytic role in this reaction. This is tRNA N6-adenosine threonylcarbamoyltransferase from Phytoplasma australiense.